Reading from the N-terminus, the 393-residue chain is Elongation factor Tu (393 aa).

A tr-type G domain is found at Lys10–Val203. The G1 stretch occupies residues Gly19–Thr26. Residue Gly19–Thr26 coordinates GTP. Residue Thr26 coordinates Mg(2+). Positions Gly60–Ser64 are G2. A G3 region spans residues Asp81–Gly84. Residues Asp81–His85 and Asn136–Asp139 contribute to the GTP site. Positions Asn136–Asp139 are G4. The tract at residues Ser173–Leu175 is G5.

The protein belongs to the TRAFAC class translation factor GTPase superfamily. Classic translation factor GTPase family. EF-Tu/EF-1A subfamily. As to quaternary structure, monomer.

The protein localises to the cytoplasm. The catalysed reaction is GTP + H2O = GDP + phosphate + H(+). In terms of biological role, GTP hydrolase that promotes the GTP-dependent binding of aminoacyl-tRNA to the A-site of ribosomes during protein biosynthesis. This chain is Elongation factor Tu, found in Chlorobaculum tepidum (strain ATCC 49652 / DSM 12025 / NBRC 103806 / TLS) (Chlorobium tepidum).